The primary structure comprises 345 residues: uncharacterized protein (345 aa).

Solcar repeat units follow at residues M80–R153, S162–K246, and N256–F339. Transmembrane regions (helical) follow at residues F83–I103, G128–E148, A220–W240, A262–V282, V296–V316, and V319–F339.

This sequence belongs to the mitochondrial carrier (TC 2.A.29) family.

Its subcellular location is the mitochondrion inner membrane. This is an uncharacterized protein from Schizosaccharomyces pombe (strain 972 / ATCC 24843) (Fission yeast).